A 203-amino-acid chain; its full sequence is Glycerol-3-phosphate acyltransferase (203 aa).

Helical transmembrane passes span 1 to 21 (MPAW…GSIP), 52 to 72 (VGKG…AAAV), 73 to 93 (ALGS…GAVI), 115 to 135 (ILLA…LLGI), 140 to 160 (IVSF…WALG), and 161 to 181 (QPLP…AAHR).

The protein belongs to the PlsY family. Probably interacts with PlsX.

It localises to the cell inner membrane. The enzyme catalyses an acyl phosphate + sn-glycerol 3-phosphate = a 1-acyl-sn-glycero-3-phosphate + phosphate. Its pathway is lipid metabolism; phospholipid metabolism. Catalyzes the transfer of an acyl group from acyl-phosphate (acyl-PO(4)) to glycerol-3-phosphate (G3P) to form lysophosphatidic acid (LPA). This enzyme utilizes acyl-phosphate as fatty acyl donor, but not acyl-CoA or acyl-ACP. This chain is Glycerol-3-phosphate acyltransferase, found in Synechococcus sp. (strain JA-3-3Ab) (Cyanobacteria bacterium Yellowstone A-Prime).